Consider the following 304-residue polypeptide: tRNA-uridine aminocarboxypropyltransferase 1 (304 aa).

2 disordered regions span residues 1–29 (MALS…QTTS) and 165–193 (RNKA…HEST). A compositionally biased stretch (basic and acidic residues) spans 180 to 193 (RTTDEEGWDLHEST). Positions 206 to 209 (DSTW) match the DXTW motif.

The protein belongs to the TDD superfamily. DTWD1 family.

The protein localises to the nucleus. It catalyses the reaction a uridine in tRNA + S-adenosyl-L-methionine = a 3-[(3S)-3-amino-3-carboxypropyl]uridine in tRNA + S-methyl-5'-thioadenosine + H(+). Catalyzes the formation of 3-(3-amino-3-carboxypropyl)uridine (acp3U) at position 20 in the D-loop of several cytoplasmic tRNAs (acp3U(20)). This Mus musculus (Mouse) protein is tRNA-uridine aminocarboxypropyltransferase 1.